The sequence spans 869 residues: Rho GTPase-activating protein 27 (869 aa).

The 64-residue stretch at 6-69 (EGDVYVLVEH…PAQYVRELPA (64 aa)) folds into the SH3 domain. Ala28 carries the phosphotyrosine modification. Residues 104–134 (GADGSSAEPRGRASSLCGPARQRTGGQRNSL) form a disordered region. A phosphoserine mark is found at Ser155, Ser215, and Ser249. Disordered stretches follow at residues 208–300 (RCPP…SGES) and 331–401 (ETEE…GWSC). A compositionally biased stretch (basic and acidic residues) spans 209–220 (CPPRAESPKQVD). Low complexity predominate over residues 235–250 (RATSPRSAAAPPRLSP). Residues 246-280 (PRLSPVWETHTDTGTGRPYYYNPDTGVTTWESPFE) enclose the WW 1 domain. A compositionally biased stretch (polar residues) spans 283-294 (EGTTSPATSRAS). Positions 299–333 (ESLETEWGQYWDEESRRVFFYNPLTGETAWEDETE) constitute a WW 2 domain. Polar residues predominate over residues 345 to 356 (MQPSLSPRSPGQ). A Phosphoserine modification is found at Ser350. The WW 3 domain maps to 414–447 (QFTQEQWVRLEDQHGKPYFYNPEDSSVQWELPQV). 2 disordered regions span residues 449–477 (IPAPRSVRKSSQDSDTPAQASPPEEKIKT) and 623–642 (EEDVRQNAASPSLSPGGLES). Phosphoserine occurs at positions 459 and 462. Phosphothreonine is present on Thr464. A Phosphoserine modification is found at Ser469. Positions 477-593 (TLDKAGVLHR…WHKAIAEGIS (117 aa)) constitute a PH domain. Phosphoserine occurs at positions 632 and 636. Residues 677–866 (CALAQLCERE…LILHQCADIF (190 aa)) form the Rho-GAP domain.

In terms of assembly, interacts with SH3KBP1/CIN85. Widely expressed. Highly expressed in kidney, lung, small intestine and thymus.

It is found in the cytoplasm. Its subcellular location is the membrane. Functionally, rho GTPase-activating protein which may be involved in clathrin-mediated endocytosis. GTPase activators for the Rho-type GTPases act by converting them to an inactive GDP-bound state. Has activity toward CDC42 and RAC1. The protein is Rho GTPase-activating protein 27 (Arhgap27) of Mus musculus (Mouse).